Here is a 1052-residue protein sequence, read N- to C-terminus: Protein HelA (1052 aa).

13 helical membrane passes run 14–34, 121–141, 348–368, 369–389, 393–413, 450–470, 483–503, 537–557, 878–898, 903–923, 934–954, 979–999, and 1011–1031; these read WFVL…FQRL, LPPG…EIFM, GALL…AALI, TAMV…ENQI, LMSL…IIVE, SIFG…LTGV, IIAL…AVAI, VVIS…FHLG, LQIV…ISFG, ALLV…ALWL, VGFI…ITFI, PVLM…LATG, and VVIG…PGLY.

This sequence belongs to the resistance-nodulation-cell division (RND) (TC 2.A.6) family.

Its subcellular location is the cell inner membrane. Its function is as follows. Presumed to function with HelC and HelB in efflux of an unidentified substrate. The protein is Protein HelA (helA) of Legionella pneumophila.